The following is a 158-amino-acid chain: Transcription elongation factor GreA (158 aa).

Residues 53–73 (EQQGMVEARIRDIEAKLSNAQ) are a coiled coil.

Belongs to the GreA/GreB family.

Its function is as follows. Necessary for efficient RNA polymerase transcription elongation past template-encoded arresting sites. The arresting sites in DNA have the property of trapping a certain fraction of elongating RNA polymerases that pass through, resulting in locked ternary complexes. Cleavage of the nascent transcript by cleavage factors such as GreA or GreB allows the resumption of elongation from the new 3'terminus. GreA releases sequences of 2 to 3 nucleotides. In Pseudomonas aeruginosa (strain ATCC 15692 / DSM 22644 / CIP 104116 / JCM 14847 / LMG 12228 / 1C / PRS 101 / PAO1), this protein is Transcription elongation factor GreA.